Consider the following 346-residue polypeptide: S-adenosylmethionine:tRNA ribosyltransferase-isomerase (346 aa).

It belongs to the QueA family. In terms of assembly, monomer.

It localises to the cytoplasm. The enzyme catalyses 7-aminomethyl-7-carbaguanosine(34) in tRNA + S-adenosyl-L-methionine = epoxyqueuosine(34) in tRNA + adenine + L-methionine + 2 H(+). Its pathway is tRNA modification; tRNA-queuosine biosynthesis. Transfers and isomerizes the ribose moiety from AdoMet to the 7-aminomethyl group of 7-deazaguanine (preQ1-tRNA) to give epoxyqueuosine (oQ-tRNA). The sequence is that of S-adenosylmethionine:tRNA ribosyltransferase-isomerase from Neisseria gonorrhoeae (strain ATCC 700825 / FA 1090).